We begin with the raw amino-acid sequence, 94 residues long: Large ribosomal subunit protein bL25 (94 aa).

Belongs to the bacterial ribosomal protein bL25 family. As to quaternary structure, part of the 50S ribosomal subunit; part of the 5S rRNA/L5/L18/L25 subcomplex. Contacts the 5S rRNA. Binds to the 5S rRNA independently of L5 and L18.

Functionally, this is one of the proteins that binds to the 5S RNA in the ribosome where it forms part of the central protuberance. The sequence is that of Large ribosomal subunit protein bL25 from Photorhabdus laumondii subsp. laumondii (strain DSM 15139 / CIP 105565 / TT01) (Photorhabdus luminescens subsp. laumondii).